The following is a 144-amino-acid chain: Large ribosomal subunit protein uL16 (144 aa).

Positions 1–19 (MLLPKRVKYRRQHRPKTTG) are enriched in basic residues. The tract at residues 1-23 (MLLPKRVKYRRQHRPKTTGRSKG) is disordered.

It belongs to the universal ribosomal protein uL16 family. Part of the 50S ribosomal subunit.

In terms of biological role, binds 23S rRNA and is also seen to make contacts with the A and possibly P site tRNAs. The sequence is that of Large ribosomal subunit protein uL16 from Staphylococcus carnosus (strain TM300).